We begin with the raw amino-acid sequence, 97 residues long: MTKITKEEVNKVAHLARLELNENEINNHAEQLEKILDYIRQLEKIDTDDVPCTTRAIEVVNVFRKDEKKNSDCNEELLELGPSREDKYFKVPKILNE.

The protein belongs to the GatC family. As to quaternary structure, heterotrimer of A, B and C subunits.

It catalyses the reaction L-glutamyl-tRNA(Gln) + L-glutamine + ATP + H2O = L-glutaminyl-tRNA(Gln) + L-glutamate + ADP + phosphate + H(+). It carries out the reaction L-aspartyl-tRNA(Asn) + L-glutamine + ATP + H2O = L-asparaginyl-tRNA(Asn) + L-glutamate + ADP + phosphate + 2 H(+). In terms of biological role, allows the formation of correctly charged Asn-tRNA(Asn) or Gln-tRNA(Gln) through the transamidation of misacylated Asp-tRNA(Asn) or Glu-tRNA(Gln) in organisms which lack either or both of asparaginyl-tRNA or glutaminyl-tRNA synthetases. The reaction takes place in the presence of glutamine and ATP through an activated phospho-Asp-tRNA(Asn) or phospho-Glu-tRNA(Gln). The chain is Aspartyl/glutamyl-tRNA(Asn/Gln) amidotransferase subunit C from Prochlorococcus marinus (strain AS9601).